We begin with the raw amino-acid sequence, 1530 residues long: MGTALLQRGGCFLLCLSLLLLGCWAELGSGLEFPGAEGQWTRFPKWNACCESEMSFQLKTRSARGLVLYFDDEGFCDFLELILTRGGRLQLSFSIFCAEPATLLTDTPVNDGAWHNVRIRRQFRNTTLFIDQVEAKWVEVKSKRRDMTVFSGLFVGGLPPELRAAALKLTLASVREREPFKGWIRDVRVNSSLALPVDSGEVKLDDEPPNSGGGSPCEAGEEGEGGVCLNGGVCSVVDDQAVCDCSRTGFRGKDCSQEDNNVEGLAHLMMGDQGKSKEDNNVEGLAHLMMGDQGKEEYIATFKGSEYFCYDLSQNPIQSSSDEITLSFKTLQRNGLMLHTGKSADYVNLALKNGAVSLVINLGSGAFEALVEPVNGKFNDNAWHDVKVTRNLRQTSGIGHAMVNKLHCSVTISVDGILTTTGYTQEDYTMLGSDDFFYVGGSPSTADLPGSPVSNNFMGCLKEVVYKNNDVRLELSRLAKQGDPKMKIHGVVAFKCENVATLDPITFETPESFISLPKWNAKKTGSISFDFRTTEPNGLILFSHGKPRHQKDAKHPQMIKVDFFAIEMLDGHLYLLLDMGSGTIKIKALQKKVNDGEWYHVDFQRDGRSGTISVNTLRTPYTAPGESQILDLDDELYLGGLPENKAGLVFPTEVWTALLNYGYVGCIRDLFIDGQSKDIRQMAEVQSTAGVKPSCSRETAKPCLSNPCKNNGMCRDGWNRYVCDCSGTGYLGRSCEREATVLSYDGSMFMKIQLPVVMHTEAEDVSLRFRSQRAYGILMATTSRDSADTLRLELDAGRVKLTVNLDCIRINCNSSKGPETLFAGYNLNDNEWHTVRVVRRGKSLKLTVDDQQAMTGQMAGDHTRLEFHNIETGIITERRYLSSVPSNFIGHLQSLTFNGMAYIDLCKNGDIDYCELNARFGFRNIIADPVTFKTKSSYVALATLQAYTSMHLFFQFKTTSLDGLILYNSGDGNDFIVVELVKGYLHYVFDLGNGANLIKGSSNKPLNDNQWHNVMISRDTSNLHTVKIDTKITTQITAGARNLDLKSDLYIGGVAKETYKSLPKLVHAKEGFQGCLASVDLNGRLPDLISDALFCNGQIERGCEGPSTTCQEDSCSNQGVCLQQWDGISCDCSMTSFSGPLCNDPGTTYIFSKGGGQITYKWPPNDRPSTRADRLAIGFSTVQKEAVLVRVDSSSGLGDYLELHIHQGKIGVKFNVGTDDIAIEESNAIINDGKYHVVRFTRSGGNATLQVDSWPVIERYPAGNNDNERLAIARQRIPYRLGRVVDEWLLDKGRQLTIFNSQATIIIGGKEQGQPFQGQLSGLYYNGLKVLNMAAENDANIAIVGNVRLVGEVPSSMTTESTATAMQSEMSTSIMETTTTLATSTARRGKPPTKEPVSQTTDDILVASAECPSDDEDIDPCEPSSGGLANPTRAGGREPYPGSAEVIRESSSTTGMVVGIVAAAALCILILLYAMYKYRNRDEGSYHVDESRNYISNSAQSNGAVVKEKQPSSAKSANKNKKNKDKEYYV.

An N-terminal signal peptide occupies residues 1-30 (MGTALLQRGGCFLLCLSLLLLGCWAELGSG). In terms of domain architecture, Laminin G-like 1 spans 31-212 (LEFPGAEGQW…KLDDEPPNSG (182 aa)). The Extracellular portion of the chain corresponds to 31–1454 (LEFPGAEGQW…EVIRESSSTT (1424 aa)). 2 N-linked (GlcNAc...) asparagine glycosylation sites follow: Asn-125 and Asn-190. The segment at 199–221 (SGEVKLDDEPPNSGGGSPCEAGE) is disordered. Residues 213–256 (GGSPCEAGEEGEGGVCLNGGVCSVVDDQAVCDCSRTGFRGKDCS) form the EGF-like 1 domain. Cystine bridges form between Cys-228–Cys-243 and Cys-245–Cys-255. Laminin G-like domains follow at residues 299 to 496 (IATF…AFKC) and 503 to 695 (DPIT…KPSC). Ca(2+) is bound by residues Asp-345, Leu-362, and Met-430. Cystine bridges form between Cys-460–Cys-496, Cys-666–Cys-695, Cys-703–Cys-714, Cys-708–Cys-723, and Cys-725–Cys-735. One can recognise an EGF-like 2 domain in the interval 699–736 (TAKPCLSNPCKNNGMCRDGWNRYVCDCSGTGYLGRSCE). The O-linked (Glc...) serine glycan is linked to Ser-705. Laminin G-like domains follow at residues 741–914 (VLSY…IDYC) and 928–1103 (DPVT…ERGC). Positions 788 and 805 each coordinate Ca(2+). N-linked (GlcNAc...) asparagine glycosylation is present at Asn-813. Arg-864 lines the Ca(2+) pocket. Cystine bridges form between Cys-906-Cys-914, Cys-1075-Cys-1103, Cys-1110-Cys-1121, Cys-1115-Cys-1130, and Cys-1132-Cys-1142. An EGF-like 3 domain is found at 1106–1143 (PSTTCQEDSCSNQGVCLQQWDGISCDCSMTSFSGPLCN). A Laminin G-like 6 domain is found at 1149–1347 (YIFSKGGGQI…DANIAIVGNV (199 aa)). Positions 1199 and 1216 each coordinate Ca(2+). N-linked (GlcNAc...) asparagine glycosylation occurs at Asn-1246. Residues Ile-1298 and Asn-1300 each contribute to the Ca(2+) site. O-linked (Xyl...) (heparan sulfate) serine glycosylation is present at Ser-1408. A disordered region spans residues 1411–1443 (CPSDDEDIDPCEPSSGGLANPTRAGGREPYPGS). A helical transmembrane segment spans residues 1455-1475 (GMVVGIVAAAALCILILLYAM). Residues 1476–1530 (YKYRNRDEGSYHVDESRNYISNSAQSNGAVVKEKQPSSAKSANKNKKNKDKEYYV) are Cytoplasmic-facing. Residues 1497–1523 (NSAQSNGAVVKEKQPSSAKSANKNKKN) are interaction with CASK. Positions 1497–1530 (NSAQSNGAVVKEKQPSSAKSANKNKKNKDKEYYV) are disordered.

Belongs to the neurexin family. Interacts (via laminin G-like domain 2 and/or laminin G-like domain 6) with NLGN1 forming a heterotetramer, where one NLGN1 dimer interacts with one NRXN1 dimer. Also interacts (via laminin G-like domain 2 and/or laminin G-like domain 6) with NLGN2, NLGN3 and NLGN4L; interactions with NLGN1, NLGN2, NLGN3 and NLGN4L are calcium-dependent. Interacts (via cytoplasmic C-terminal region) with CASK (via the PDZ, SH3 and guanylate kinase-like domains). Interacts (via cytoplasmic C-terminus) with CASKIN1 and APBA1. Interacts (via laminin G-like domain 2) with NXPH1 and NXPH3. Alpha-type isoforms (neurexin-1-alpha) interact (via laminin G-like domain 2 and/or laminin G-like domain 6) with DAG1 (via alpha-dystroglycan chain). Interacts with LRRTM1, LRRTM2, LRRTM3 and LRRTM4. Interacts with SYT13 and SYTL1. Interacts with CBLN1, CBLN2 and, less avidly, with CBLN4. Interacts with CLSTN3. Alpha-type isoforms interact with alpha-latrotoxin from spider venom. Post-translationally, O-glycosylated; contains heparan sulfate. Heparan sulfate attachment is required for synapse development by mediating interactions with neuroligins and LRRTM2.

Its subcellular location is the presynaptic cell membrane. Functionally, cell surface protein involved in cell-cell-interactions, exocytosis of secretory granules and regulation of signal transmission. Function is isoform-specific. Alpha-type isoforms have a long N-terminus with six laminin G-like domains and play an important role in synaptic signal transmission. Alpha-type isoforms play a role in the regulation of calcium channel activity and Ca(2+)-triggered neurotransmitter release at synapses and at neuromuscular junctions. They play an important role in Ca(2+)-triggered exocytosis of secretory granules in pituitary gland. They may affect their functions at synapses and in endocrine cells via their interactions with proteins from the exocytotic machinery. Likewise, alpha-type isoforms play a role in regulating the activity of postsynaptic NMDA receptors, a subtype of glutamate-gated ion channels. Both alpha-type and beta-type isoforms may play a role in the formation or maintenance of synaptic junctions via their interactions (via the extracellular domains) with neuroligin family members, CBLN1 or CBLN2. In vitro, triggers the de novo formation of presynaptic structures. May be involved in specification of excitatory synapses. Alpha-type isoforms were first identified as receptors for alpha-latrotoxin from spider venom. This Bos taurus (Bovine) protein is Neurexin-1 (NRXN1).